The chain runs to 411 residues: D-galactonate dehydratase family member SBI_01856 (411 aa).

Substrate contacts are provided by N45 and H130. The Proton donor/acceptor role is filled by Y167. Residue D219 coordinates Mg(2+). The active-site Proton donor/acceptor is the H221. Residues E245 and E271 each contribute to the Mg(2+) site. E271, R292, H321, D325, and E348 together coordinate substrate.

The protein belongs to the mandelate racemase/muconate lactonizing enzyme family. GalD subfamily. It depends on Mg(2+) as a cofactor.

It carries out the reaction D-gluconate = 2-dehydro-3-deoxy-D-gluconate + H2O. Has low D-gluconate dehydratase activity (in vitro), suggesting that it has no significant role in D-gluconate degradation in vivo. Has no detectable activity with a panel of 70 other acid sugars (in vitro). The polypeptide is D-galactonate dehydratase family member SBI_01856 (Streptomyces bingchenggensis (strain BCW-1)).